The chain runs to 269 residues: Ribosomal RNA small subunit methyltransferase A (269 aa).

Positions 18, 20, 45, 66, 91, and 112 each coordinate S-adenosyl-L-methionine.

Belongs to the class I-like SAM-binding methyltransferase superfamily. rRNA adenine N(6)-methyltransferase family. RsmA subfamily.

The protein resides in the cytoplasm. The catalysed reaction is adenosine(1518)/adenosine(1519) in 16S rRNA + 4 S-adenosyl-L-methionine = N(6)-dimethyladenosine(1518)/N(6)-dimethyladenosine(1519) in 16S rRNA + 4 S-adenosyl-L-homocysteine + 4 H(+). In terms of biological role, specifically dimethylates two adjacent adenosines (A1518 and A1519) in the loop of a conserved hairpin near the 3'-end of 16S rRNA in the 30S particle. May play a critical role in biogenesis of 30S subunits. This is Ribosomal RNA small subunit methyltransferase A from Vibrio parahaemolyticus serotype O3:K6 (strain RIMD 2210633).